A 79-amino-acid chain; its full sequence is Small ribosomal subunit protein bS21 (79 aa).

Composition is skewed to basic residues over residues 47–59 (RKQA…HLKK) and 69–79 (GVGHRRKKSTT). The segment at 47–79 (RKQAAAVKRHLKKISRDVSSRRGVGHRRKKSTT) is disordered.

It belongs to the bacterial ribosomal protein bS21 family.

In Legionella pneumophila (strain Paris), this protein is Small ribosomal subunit protein bS21.